A 72-amino-acid chain; its full sequence is Translation initiation factor IF-1 (72 aa).

In terms of domain architecture, S1-like spans 1-72; sequence MAKQSAIEKD…SKGRIAFRYK (72 aa).

This sequence belongs to the IF-1 family. Component of the 30S ribosomal translation pre-initiation complex which assembles on the 30S ribosome in the order IF-2 and IF-3, IF-1 and N-formylmethionyl-tRNA(fMet); mRNA recruitment can occur at any time during PIC assembly.

The protein resides in the cytoplasm. In terms of biological role, one of the essential components for the initiation of protein synthesis. Stabilizes the binding of IF-2 and IF-3 on the 30S subunit to which N-formylmethionyl-tRNA(fMet) subsequently binds. Helps modulate mRNA selection, yielding the 30S pre-initiation complex (PIC). Upon addition of the 50S ribosomal subunit IF-1, IF-2 and IF-3 are released leaving the mature 70S translation initiation complex. In Parabacteroides distasonis (strain ATCC 8503 / DSM 20701 / CIP 104284 / JCM 5825 / NCTC 11152), this protein is Translation initiation factor IF-1.